A 700-amino-acid chain; its full sequence is Receptor-type tyrosine-protein phosphatase epsilon (700 aa).

Positions Met1–Ala19 are cleaved as a signal peptide. Topologically, residues Leu20–Pro46 are extracellular. N-linked (GlcNAc...) asparagine glycans are attached at residues Asn23 and Asn30. The helical transmembrane segment at Leu47–Phe69 threads the bilayer. At Arg70–Lys700 the chain is on the cytoplasmic side. Tyrosine-protein phosphatase domains lie at Phe135–Tyr394 and Leu426–Phe689. Residues Asp303, Cys335 to Arg341, and Gln379 contribute to the substrate site. Residue Cys335 is the Phosphocysteine intermediate of the active site. Cys630 functions as the Phosphocysteine intermediate in the catalytic mechanism. At Tyr696 the chain carries Phosphotyrosine.

It belongs to the protein-tyrosine phosphatase family. Receptor class 4 subfamily. As to quaternary structure, monomer. Isoform 2: Homodimer. Can form oligomers. Dimerization is increased by oxidative stress and decreased by EGFR. Isoform 2 interacts with GRB2. A catalytically active cytoplasmic form (p65) is produced by proteolytic cleavage of either isoform 1, isoform 2 or isoform 3. In terms of processing, isoform 1 and isoform 2 are phosphorylated on tyrosine residues by tyrosine kinase Neu. Post-translationally, isoform 1 is glycosylated. As to expression, expressed in giant cell tumor (osteoclastoma rich in multinucleated osteoclastic cells).

The protein localises to the cell membrane. Its subcellular location is the cytoplasm. The catalysed reaction is O-phospho-L-tyrosyl-[protein] + H2O = L-tyrosyl-[protein] + phosphate. In terms of biological role, isoform 1 plays a critical role in signaling transduction pathways and phosphoprotein network topology in red blood cells. May play a role in osteoclast formation and function. Functionally, isoform 2 acts as a negative regulator of insulin receptor (IR) signaling in skeletal muscle. Regulates insulin-induced tyrosine phosphorylation of insulin receptor (IR) and insulin receptor substrate 1 (IRS-1), phosphorylation of protein kinase B and glycogen synthase kinase-3 and insulin induced stimulation of glucose uptake. Its function is as follows. Isoform 1 and isoform 2 act as a negative regulator of FceRI-mediated signal transduction leading to cytokine production and degranulation, most likely by acting at the level of SYK to affect downstream events such as phosphorylation of SLP76 and LAT and mobilization of Ca(2+). This is Receptor-type tyrosine-protein phosphatase epsilon (PTPRE) from Homo sapiens (Human).